The chain runs to 316 residues: Pantothenate kinase (316 aa).

95 to 102 (GSVAVGKS) is an ATP binding site.

The protein belongs to the prokaryotic pantothenate kinase family.

It localises to the cytoplasm. The enzyme catalyses (R)-pantothenate + ATP = (R)-4'-phosphopantothenate + ADP + H(+). The protein operates within cofactor biosynthesis; coenzyme A biosynthesis; CoA from (R)-pantothenate: step 1/5. In Shewanella oneidensis (strain ATCC 700550 / JCM 31522 / CIP 106686 / LMG 19005 / NCIMB 14063 / MR-1), this protein is Pantothenate kinase.